A 262-amino-acid polypeptide reads, in one-letter code: Zinc import ATP-binding protein ZnuC (262 aa).

The ABC transporter domain maps to 5 to 220; that stretch reads VSLEQLCVEF…PSYIALFGNA (216 aa). 37–44 lines the ATP pocket; the sequence is GPNGAGKS. A disordered region spans residues 236–262; sequence HHDLSGSPVSGDATSCSNHNHGHHHHD.

The protein belongs to the ABC transporter superfamily. Zinc importer (TC 3.A.1.15.5) family. The complex is composed of two ATP-binding proteins (ZnuC), two transmembrane proteins (ZnuB) and a solute-binding protein (ZnuA).

The protein localises to the cell inner membrane. The enzyme catalyses Zn(2+)(out) + ATP(in) + H2O(in) = Zn(2+)(in) + ADP(in) + phosphate(in) + H(+)(in). Functionally, part of the ABC transporter complex ZnuABC involved in zinc import. Responsible for energy coupling to the transport system. This is Zinc import ATP-binding protein ZnuC from Vibrio parahaemolyticus serotype O3:K6 (strain RIMD 2210633).